Consider the following 250-residue polypeptide: 5'-nucleotidase SurE (250 aa).

4 residues coordinate a divalent metal cation: D8, D9, S40, and N94.

The protein belongs to the SurE nucleotidase family. A divalent metal cation serves as cofactor.

It localises to the cytoplasm. It catalyses the reaction a ribonucleoside 5'-phosphate + H2O = a ribonucleoside + phosphate. Its function is as follows. Nucleotidase that shows phosphatase activity on nucleoside 5'-monophosphates. This Wolbachia sp. subsp. Brugia malayi (strain TRS) protein is 5'-nucleotidase SurE.